A 272-amino-acid polypeptide reads, in one-letter code: Outer surface protein A (272 aa).

Residues 1–16 (MKKYLLGIGLILALIA) form the signal peptide. A lipid anchor (N-palmitoyl cysteine) is attached at cysteine 17. The S-diacylglycerol cysteine moiety is linked to residue cysteine 17.

This sequence belongs to the OspA lipoprotein family.

It is found in the cell outer membrane. The protein resides in the cell surface. The sequence is that of Outer surface protein A from Borreliella burgdorferi (Lyme disease spirochete).